The following is a 1408-amino-acid chain: DNA-directed RNA polymerase subunit beta' (1408 aa).

Zn(2+) contacts are provided by Cys-70, Cys-72, Cys-85, and Cys-88. Mg(2+) contacts are provided by Asp-458, Asp-460, and Asp-462. Residues Cys-813, Cys-887, Cys-894, and Cys-897 each coordinate Zn(2+). The tract at residues Ala-1387–Glu-1408 is disordered. A compositionally biased stretch (low complexity) spans Leu-1389 to Glu-1408.

Belongs to the RNA polymerase beta' chain family. The RNAP catalytic core consists of 2 alpha, 1 beta, 1 beta' and 1 omega subunit. When a sigma factor is associated with the core the holoenzyme is formed, which can initiate transcription. Mg(2+) serves as cofactor. Zn(2+) is required as a cofactor.

The catalysed reaction is RNA(n) + a ribonucleoside 5'-triphosphate = RNA(n+1) + diphosphate. Functionally, DNA-dependent RNA polymerase catalyzes the transcription of DNA into RNA using the four ribonucleoside triphosphates as substrates. This is DNA-directed RNA polymerase subunit beta' from Polaromonas sp. (strain JS666 / ATCC BAA-500).